The following is a 373-amino-acid chain: Transcription factor bHLH87 (373 aa).

A disordered region spans residues 127-227; sequence SAESENREIT…GGSSNISFQH (101 aa). Positions 188–218 are enriched in basic and acidic residues; it reads PQDDSEKGGFKLIYDENQSKSKKPRTEKERG. The bHLH domain occupies 275–324; that stretch reads ISTDPQTVAARQRRERISEKIRVLQTLVPGGTKMDTASMLDEAANYLKFL.

As to quaternary structure, homodimer. As to expression, flowers.

It localises to the nucleus. This Arabidopsis thaliana (Mouse-ear cress) protein is Transcription factor bHLH87 (BHLH87).